A 182-amino-acid chain; its full sequence is Probable RNA 2'-phosphotransferase (182 aa).

The protein belongs to the KptA/TPT1 family.

In terms of biological role, removes the 2'-phosphate from RNA via an intermediate in which the phosphate is ADP-ribosylated by NAD followed by a presumed transesterification to release the RNA and generate ADP-ribose 1''-2''-cyclic phosphate (APPR&gt;P). May function as an ADP-ribosylase. The sequence is that of Probable RNA 2'-phosphotransferase from Pseudomonas aeruginosa (strain UCBPP-PA14).